The primary structure comprises 206 residues: Ras-related protein RABG3d (206 aa).

15–22 serves as a coordination point for GTP; sequence GDSGVGKT. Positions 37-45 match the Effector region motif; that stretch reads YKATIGADF. GTP-binding positions include 63 to 67, 125 to 128, and 158 to 159; these read DTAGQ, NKTD, and SA. 2 S-geranylgeranyl cysteine lipidation sites follow: C204 and C206. A Cysteine methyl ester modification is found at C206.

It belongs to the small GTPase superfamily. Rab family.

Its subcellular location is the cell membrane. Functionally, intracellular vesicle trafficking and protein transport. This Arabidopsis thaliana (Mouse-ear cress) protein is Ras-related protein RABG3d (RABG3D).